The following is a 329-amino-acid chain: Transmembrane protein I329L (329 aa).

A signal peptide spans 1-31; sequence MLRVFIFFVFLGSGLAGKVKSPITCKYFISK. Asn-32, Asn-39, Asn-44, Asn-58, Asn-76, Asn-82, Asn-101, Asn-185, and Asn-219 each carry an N-linked (GlcNAc...) asparagine; by host glycan. At 32–239 the chain is on the extracellular side; sequence NNTWYKYNVT…NTERYKNCYP (208 aa). The helical transmembrane segment at 240-260 threads the bilayer; the sequence is FVLVSIICSCISSLFLLICLL. The Cytoplasmic portion of the chain corresponds to 261–329; the sequence is RTICKKYSCT…EKKVSCSRRK (69 aa).

Belongs to the asfivirus I329L family. Post-translationally, highly glycosylated.

The protein resides in the host endoplasmic reticulum membrane. Its subcellular location is the host Golgi apparatus membrane. In terms of biological role, viral TLR3 homolog that probably prevents TLR3 dimerization and subsequent induction of IFN. Inhibits dsRNA-stimulated activation of NF-kB and IRF3. This is Transmembrane protein I329L from Ornithodoros (relapsing fever ticks).